Here is a 730-residue protein sequence, read N- to C-terminus: Neuroligin-like protein glit-1 (730 aa).

The N-terminal stretch at 1–18 (MFTGTIFNSLFTLPLVIS) is a signal peptide. Residues 19–663 (QFVPPPTRPV…EIMVFKWITG (645 aa)) are Extracellular-facing. Asn103, Asn320, Asn445, Asn512, Asn557, Asn564, and Asn604 each carry an N-linked (GlcNAc...) asparagine glycan. A helical transmembrane segment spans residues 664 to 684 (VNVIIIALLIVLAGAFGYMVW). At 685–730 (GNKEDEEAAYKAENHQLVEYRDTGHSVSDATISSRTRSPRSRITNL) the chain is on the cytoplasmic side.

The protein belongs to the type-B carboxylesterase/lipase family. As to expression, expressed in the pharynx, intestine, and in several cells in the head including dopaminergic neurons.

The protein localises to the cell membrane. Its function is as follows. Probable neuronal cell surface protein thought to be involved in cell-cell-interactions. Confers protection against oxidative stress. Plays a role in protecting dopaminergic neurons against oxidative stress-induced neurodegeneration. This chain is Neuroligin-like protein glit-1, found in Caenorhabditis elegans.